Consider the following 363-residue polypeptide: Adenosine deaminase (363 aa).

Zn(2+) is bound by residues H42 and H44. A purine D-ribonucleoside is bound by residues 44-46 (HLD), D172, and G201. The tract at residues 170-184 (IGDTGHRAADIKASA) is gating helix loop; regulates binding affinity for substrates and thus substrate selectivity. H226 lines the Zn(2+) pocket. E229, H253, and D310 together coordinate a purine D-ribonucleoside. Residue D310 participates in Zn(2+) binding.

This sequence belongs to the metallo-dependent hydrolases superfamily. Adenosine and AMP deaminases family. Zn(2+) serves as cofactor.

The catalysed reaction is adenosine + H2O + H(+) = inosine + NH4(+). It catalyses the reaction S-methyl-5'-thioadenosine + H2O + H(+) = S-methyl-5'-thioinosine + NH4(+). Its pathway is purine metabolism; purine nucleoside salvage. Inhibited by coformycin and methylthiocoformycin (MT-coformycin). Catalyzes the hydrolytic deamination of adenosine to produce inosine. Unlike mammalian adenosine deaminases, also catalyzes the deamination of 5'-methylthioadenosine (MTA), a by-product of polyamine biosynthesis, to produce 5'-methylthioinosine (MTI). Plays an essential role in the purine salvage pathway which allows the parasite to use host cell purines for the synthesis of nucleic acids. The sequence is that of Adenosine deaminase from Plasmodium knowlesi.